The primary structure comprises 348 residues: LRP2-binding protein (348 aa).

Residues Thr60 to Ala93 form a TPR repeat. Sel1-like repeat units lie at residues Thr94 to Cys126, Phe134 to Asn169, Val174 to Asn207, Leu208 to Asn243, Val244 to Asp278, and Ala298 to Pro333.

Interacts with LRP2.

It localises to the cytoplasm. In terms of biological role, may act as an adapter that regulates LRP2 function. The chain is LRP2-binding protein (LRP2BP) from Macaca fascicularis (Crab-eating macaque).